The primary structure comprises 313 residues: Aspartate carbamoyltransferase catalytic subunit (313 aa).

R58 and T59 together coordinate carbamoyl phosphate. K86 contributes to the L-aspartate binding site. R108, H136, and Q139 together coordinate carbamoyl phosphate. The L-aspartate site is built by R169 and R223. The carbamoyl phosphate site is built by G264 and P265.

It belongs to the aspartate/ornithine carbamoyltransferase superfamily. ATCase family. As to quaternary structure, heterododecamer (2C3:3R2) of six catalytic PyrB chains organized as two trimers (C3), and six regulatory PyrI chains organized as three dimers (R2).

It carries out the reaction carbamoyl phosphate + L-aspartate = N-carbamoyl-L-aspartate + phosphate + H(+). The protein operates within pyrimidine metabolism; UMP biosynthesis via de novo pathway; (S)-dihydroorotate from bicarbonate: step 2/3. Its function is as follows. Catalyzes the condensation of carbamoyl phosphate and aspartate to form carbamoyl aspartate and inorganic phosphate, the committed step in the de novo pyrimidine nucleotide biosynthesis pathway. The chain is Aspartate carbamoyltransferase catalytic subunit from Ruminiclostridium cellulolyticum (strain ATCC 35319 / DSM 5812 / JCM 6584 / H10) (Clostridium cellulolyticum).